The primary structure comprises 90 residues: Probable Fe(2+)-trafficking protein (90 aa).

It belongs to the Fe(2+)-trafficking protein family.

In terms of biological role, could be a mediator in iron transactions between iron acquisition and iron-requiring processes, such as synthesis and/or repair of Fe-S clusters in biosynthetic enzymes. The sequence is that of Probable Fe(2+)-trafficking protein from Cupriavidus taiwanensis (strain DSM 17343 / BCRC 17206 / CCUG 44338 / CIP 107171 / LMG 19424 / R1) (Ralstonia taiwanensis (strain LMG 19424)).